A 2025-amino-acid chain; its full sequence is Pericentriolar material 1 protein (2025 aa).

A disordered region spans residues 1-91 (MATGGGPFEE…TFPHSRYMTQ (91 aa)). The residue at position 2 (Ala-2) is an N-acetylalanine. The interval 2-1458 (ATGGGPFEEV…TWVASNSELT (1457 aa)) is mediates interaction with DZIP1. A phosphoserine mark is found at Ser-65, Ser-68, Ser-69, Ser-93, Ser-110, Ser-116, Ser-119, and Ser-159. The segment at 111-140 (DLDQRSIGSDSQGRATAANNKRQLSENRKP) is disordered. Polar residues predominate over residues 116-132 (SIGSDSQGRATAANNKR). Positions 218–301 (KASSMREDLV…QLRALQGRQA (84 aa)) form a coiled coil. Residues 354–390 (RDSQPPAVPDNRRQAESLSLTREISQSRNPSVSEHLP) form a disordered region. Residues 369-385 (ESLSLTREISQSRNPSV) are compositionally biased toward polar residues. Phosphoserine is present on Ser-370. Residue Ser-372 is modified to Phosphoserine; by PLK4. The residue at position 384 (Ser-384) is a Phosphoserine. Lys-399 carries the N6-acetyllysine modification. Coiled coils occupy residues 399-426 (KMRVLQEKKQKMDKLLGELHNLRDQHLN) and 492-518 (AEKLQKLNEVQKRLNELRELVHYYEQT). Disordered regions lie at residues 528–553 (ENTKDEETEESEYDSEHENSEPVTNI) and 565–586 (VNTNSNTQCGSNNRDGRPVNSN). Acidic residues predominate over residues 531-540 (KDEETEESEY). The residue at position 593 (Ser-593) is a Phosphoserine. The interval 620–654 (AHGEDEEEEVEEEGVSGASLSSRRSSLVDEAPEDE) is disordered. Over residues 623 to 633 (EDEEEEVEEEG) the composition is skewed to acidic residues. Residues 634–644 (VSGASLSSRRS) show a composition bias toward low complexity. A Phosphoserine modification is found at Ser-644. Coiled-coil stretches lie at residues 652 to 772 (EDEE…PDLQ) and 822 to 856 (SDMRRHEMLREELRQRRKQLEALMAEHQRRQGLAE). Thr-857 bears the Phosphothreonine mark. Phosphoserine occurs at positions 859, 864, 867, and 870. Disordered stretches follow at residues 866 to 885 (RSDGSENLCTPQQSRTEKTM) and 913 to 940 (TDEEEEEEQDASSNDNFPIYPPSMNQNS). The span at 870–879 (SENLCTPQQS) shows a compositional bias: polar residues. The residue at position 875 (Thr-875) is a Phosphothreonine. Ser-957, Ser-974, Ser-985, and Ser-988 each carry phosphoserine. 2 coiled-coil regions span residues 985-1017 (SELSYIEEKEQWQEQINQLKKQLDFSVNICQTL) and 1061-1086 (QLTWQQNNVQRLKQMLTELMRQQNQH). 2 disordered regions span residues 1081–1105 (RQQNQHPEKPRSKERGSSASHPSSP) and 1149–1213 (FSQN…YDQE). Residues 1086–1096 (HPEKPRSKERG) are compositionally biased toward basic and acidic residues. The segment covering 1149-1169 (FSQNVSTPTEQQQPLAQNPSG) has biased composition (polar residues). 2 positions are modified to phosphoserine: Ser-1182 and Ser-1185. Residues 1189–1198 (EKQRNQKQPE) are compositionally biased toward basic and acidic residues. Residues Ser-1228, Ser-1254, Ser-1257, Ser-1259, and Ser-1260 each carry the phosphoserine modification. Positions 1230 to 1310 (EKATNSNRKN…STQLKSRVKN (81 aa)) are disordered. Polar residues predominate over residues 1268–1285 (TTVTKTFKTRKASAQASL). Phosphoserine occurs at positions 1315 and 1317. Residues 1319 to 1338 (SSTCEPCKNRNRHSAQTEEP) form a disordered region. Residue Thr-1466 is modified to Phosphothreonine. Phosphoserine occurs at positions 1571, 1695, 1729, 1766, 1769, 1777, and 1783. The interval 1720–1943 (KRILEGDHGS…AGSPDTESPV (224 aa)) is disordered. A compositionally biased stretch (basic and acidic residues) spans 1756-1768 (YDAKGPKNVRSDV). The span at 1784–1798 (INLSKAESQALTNYG) shows a compositional bias: polar residues. Positions 1800-1816 (GEDENEDEEMEDFEESP) are enriched in acidic residues. 4 stretches are compositionally biased toward polar residues: residues 1818–1828 (DIQTSLQANTE), 1849–1858 (ESTNVPSDQE), 1879–1901 (ENEQQLNSATHKDSLTTTDSSKQ), and 1925–1934 (AQETPESSLA). Phosphoserine occurs at positions 1959 and 1978.

It belongs to the PCM1 family. Self-associates. Interacts with BBS4, BBS8, CETN3, HAP1, NDE1, NDEL1, MAP1LC3B, GABARAPAL2, and GABARAP. Interacts with CEP131; the interaction increases in response to ultraviolet light (UV) radiation. Associates with microtubule; association to microtubule is reduced in response to cellular stress, such as ultraviolet light (UV) radiation or heat shock, in a process that requires p38 MAP kinase signaling. Interacts with C2CD3. Interacts with CFAP263. Interacts with SSX2IP. Interacts with CCDC13. Interacts with CEP290. Interacts with PARD6A. Interacts with KIAA0753/OFIP, CEP20/FOR20 and OFD1; the interaction with CEP20/FOR20 and OFD1 may be mediated by KIAA0753/OFIP. Interacts with CCDC66. Interacts with CCDC61. Interacts with DZIP1; localizes DZIP1 and the associated BBSome to centriolar satellite. Interacts with CSTPP1, TTLL1, TPGS1 and LRRC49. Interacts with CFAP53. Post-translationally, ubiquitinated. Undergoes monoubiquitination catalyzed by the E3 ubiquitin-protein ligase MIB1 in proliferating cells, preventing cilia formation. Monoubiquitination by MIB1 is inhibited in response to cellular stress, such as ultraviolet light (UV) radiation or heat shock, resulting in cilia formation initiation. Phosphorylated on multiple serine and threonine residues by DYRK3 during the G2-to-M transition, after the nuclear-envelope breakdown. Phosphorylation by DYRK3 promotes disassembly of pericentriolar material. Phosphorylation at Ser-372 mediated by PLK4 is required to maintain the integrity of centriolar satellites. Expressed in the hippocampus and dentate gyrus, the columnar epithelial cells of bronchioles, the olfactory epithelium, the pericardium and the inner segment of the retina.

Its subcellular location is the cytoplasm. The protein resides in the cytoskeleton. It is found in the microtubule organizing center. The protein localises to the centrosome. It localises to the cytoplasmic granule. Its subcellular location is the centriolar satellite. The protein resides in the cilium basal body. Functionally, required for centrosome assembly and function. Essential for the correct localization of several centrosomal proteins including CEP250, CETN3, PCNT and NEK2. Required to anchor microtubules to the centrosome. Also involved in cilium biogenesis by recruiting the BBSome, a ciliary protein complex involved in cilium biogenesis, to the centriolar satellites. Recruits the tubulin polyglutamylase complex (TPGC) to centriolar satellites. The sequence is that of Pericentriolar material 1 protein from Mus musculus (Mouse).